Here is a 102-residue protein sequence, read N- to C-terminus: Small ribosomal subunit protein uS10 (102 aa).

The protein belongs to the universal ribosomal protein uS10 family. Part of the 30S ribosomal subunit.

Involved in the binding of tRNA to the ribosomes. The polypeptide is Small ribosomal subunit protein uS10 (Streptococcus uberis (strain ATCC BAA-854 / 0140J)).